We begin with the raw amino-acid sequence, 166 residues long: Large ribosomal subunit protein uL10 (166 aa).

Belongs to the universal ribosomal protein uL10 family. As to quaternary structure, part of the ribosomal stalk of the 50S ribosomal subunit. The N-terminus interacts with L11 and the large rRNA to form the base of the stalk. The C-terminus forms an elongated spine to which L12 dimers bind in a sequential fashion forming a multimeric L10(L12)X complex.

Functionally, forms part of the ribosomal stalk, playing a central role in the interaction of the ribosome with GTP-bound translation factors. The chain is Large ribosomal subunit protein uL10 from Aromatoleum aromaticum (strain DSM 19018 / LMG 30748 / EbN1) (Azoarcus sp. (strain EbN1)).